The primary structure comprises 336 residues: ATP-dependent 6-phosphofructokinase 3 (336 aa).

ATP is bound by residues glycine 10, 72-73, and 108-111; these read RE and GNGT. Asparagine 109 is a Mg(2+) binding site. Residues 131–133, arginine 168, 175–177, glutamate 228, arginine 255, and 261–264 each bind substrate; these read TID, MGH, and YIQR. The active-site Proton acceptor is the aspartate 133.

This sequence belongs to the phosphofructokinase type A (PFKA) family. Mixed-substrate PFK group III subfamily. As to quaternary structure, homodimer or homotetramer. It depends on Mg(2+) as a cofactor.

It localises to the cytoplasm. The catalysed reaction is beta-D-fructose 6-phosphate + ATP = beta-D-fructose 1,6-bisphosphate + ADP + H(+). The protein operates within carbohydrate degradation; glycolysis; D-glyceraldehyde 3-phosphate and glycerone phosphate from D-glucose: step 3/4. Functionally, catalyzes the phosphorylation of D-fructose 6-phosphate to fructose 1,6-bisphosphate by ATP, the first committing step of glycolysis. The protein is ATP-dependent 6-phosphofructokinase 3 of Bacteroides thetaiotaomicron (strain ATCC 29148 / DSM 2079 / JCM 5827 / CCUG 10774 / NCTC 10582 / VPI-5482 / E50).